The sequence spans 426 residues: Multifunctional protein ADE2 (426 aa).

An SAICAR synthetase region spans residues 1-261; it reads MAPAASELKL…WVAERVELLL (261 aa). The segment at 262-426 is AIR carboxylase; it reads KTKSQGRVVV…ADKKLRECTL (165 aa).

In the N-terminal section; belongs to the SAICAR synthetase family. The protein in the C-terminal section; belongs to the AIR carboxylase family. Class II subfamily. In terms of assembly, homooctamer.

It carries out the reaction 5-amino-1-(5-phospho-D-ribosyl)imidazole-4-carboxylate + L-aspartate + ATP = (2S)-2-[5-amino-1-(5-phospho-beta-D-ribosyl)imidazole-4-carboxamido]succinate + ADP + phosphate + 2 H(+). The catalysed reaction is 5-amino-1-(5-phospho-D-ribosyl)imidazole-4-carboxylate + H(+) = 5-amino-1-(5-phospho-beta-D-ribosyl)imidazole + CO2. It participates in purine metabolism; IMP biosynthesis via de novo pathway; 5-amino-1-(5-phospho-D-ribosyl)imidazole-4-carboxamide from 5-amino-1-(5-phospho-D-ribosyl)imidazole-4-carboxylate: step 1/2. The protein operates within purine metabolism; IMP biosynthesis via de novo pathway; 5-amino-1-(5-phospho-D-ribosyl)imidazole-4-carboxylate from 5-amino-1-(5-phospho-D-ribosyl)imidazole (carboxylase route): step 1/1. In Gallus gallus (Chicken), this protein is Multifunctional protein ADE2 (AIRC).